We begin with the raw amino-acid sequence, 80 residues long: RNA-binding protein Hfq (80 aa).

Positions 9-69 (DVFLNQVRKE…VSTISPNSPV (61 aa)) constitute a Sm domain.

The protein belongs to the Hfq family. As to quaternary structure, homohexamer.

Its function is as follows. RNA chaperone that binds small regulatory RNA (sRNAs) and mRNAs to facilitate mRNA translational regulation in response to envelope stress, environmental stress and changes in metabolite concentrations. Also binds with high specificity to tRNAs. This Alkaliphilus oremlandii (strain OhILAs) (Clostridium oremlandii (strain OhILAs)) protein is RNA-binding protein Hfq.